The sequence spans 945 residues: MYGAGGGRAKPERKGGVKEEAGPGGTGTGGNRVELLVFGYACKLFRDDERALAQEQGQHLIPWMGDPKILIDRYDGRGHLHDLSAYDAEYATWNRDYQLSEEEARVEALCDEERYLALHTDLLEEEARQEEEYKRLSEALAEDGNYSAVGFTYGSDYYDPSEPTEEEEPSKQREKNEAENLEENEEPFIAPLGLSVPSDVELPPTAKMHAIIERTANFVCKQGAQFEIMLKAKQARNSQFDFLRFDHYLNPYYKFIQKAMKEGRYTVLAESKNEEKKKSGPTSDNEEEDDEEDGSYLHPSLFASKKSSRLEELMKPLKVVDPDHPLAALVRKAQADSSAPAPPTADGTPAQPSQVEYTADSTVAAMYYSYYMLPDGTYCLAPPPPGIDVATYYSTLPAGVTVSSSPGVTTTVPPPPGTTPPPPPTTAEPSSGVTSTTTTTSALAPVAIIPPPPDIQPVIDKLAEYVARNGLKFETSVRAKNDQRFEFLQPWHQYNAYYEFKKQFFLQKEGGGSTQAASTAEEAPTETAVEESGEAGEDGAPEGMAETGGRGSGKKEAGSSKSTVDGKLVKASFAPISFAIKAKENDLLPLEKNRVKLDDDSEEDEESRECQESTSSVANPSPAAAPPSVAVEEKKPQLTQEELEAKQAKQKLEDRLAAAAREKLAQASKESKEKQLQAERKRKAALFLQTLKNPLPEAEVGKLEESTFGVEDTGVMPCPLLVGGRTLPILEGKPPERPSNRCRDPPREEEREKKKKKHKKRSRTRSRSPKYHSSSKPRSRSHSKAKHSLPSAYRTVRRSRSRSRSPRRRAHSPERRREERSVPTAYRMSGSPGVSRKRTRSRSPHEKKKKRRSRSRTKAKARSQSTSPSKQAAQRPSAHSAHSASISPVESRGSSQERSRGVSQEKDGQISSAIVSSVQSKITQDLMAKVRAMLAASKNLQTSAS.

Disordered stretches follow at residues 1–28 (MYGA…GTGT) and 156–185 (DYYD…EENE). 2 stretches are compositionally biased toward basic and acidic residues: residues 9–21 (AKPE…KEEA) and 169–178 (PSKQREKNEA). Residues 211–253 (IIERTANFVCKQGAQFEIMLKAKQARNSQFDFLRFDHYLNPYY) form an SURP motif 1 repeat. A disordered region spans residues 271–301 (SKNEEKKKSGPTSDNEEEDDEEDGSYLHPSL). At Ser283 the chain carries Phosphoserine. Over residues 284–294 (DNEEEDDEEDG) the composition is skewed to acidic residues. An N6-acetyllysine modification is found at Lys315. Disordered stretches follow at residues 332-355 (KAQA…PSQV) and 403-448 (SSSP…PVAI). The segment covering 335-352 (ADSSAPAPPTADGTPAQP) has biased composition (low complexity). A compositionally biased stretch (pro residues) spans 412–426 (VPPPPGTTPPPPPTT). Low complexity predominate over residues 427-447 (AEPSSGVTSTTTTTSALAPVA). Residues 458-498 (VIDKLAEYVARNGLKFETSVRAKNDQRFEFLQPWHQYNAYY) form an SURP motif 2 repeat. Disordered stretches follow at residues 512-564 (GSTQ…KSTV), 589-680 (PLEK…QAER), and 712-921 (DTGV…VQSK). A compositionally biased stretch (low complexity) spans 514–527 (TQAASTAEEAPTET). A compositionally biased stretch (acidic residues) spans 528-540 (AVEESGEAGEDGA). The span at 589 to 598 (PLEKNRVKLD) shows a compositional bias: basic and acidic residues. Ser601 and Ser621 each carry phosphoserine. Residues 615 to 630 (SSVANPSPAAAPPSVA) are compositionally biased toward low complexity. Residues 632 to 686 (EEKKPQLTQEELEAKQAKQKLEDRLAAAAREKLAQASKESKEKQLQAERKRKAAL) adopt a coiled-coil conformation. A Phosphothreonine modification is found at Thr639. Composition is skewed to basic and acidic residues over residues 643-679 (LEAK…LQAE) and 733-752 (KPPE…EERE). Composition is skewed to basic residues over residues 753 to 787 (KKKK…KAKH) and 795 to 810 (TVRR…RRRA). Positions 811-821 (HSPERRREERS) are enriched in basic and acidic residues. Phosphoserine occurs at positions 829 and 831. Positions 835–861 (SRKRTRSRSPHEKKKKRRSRSRTKAKA) are enriched in basic residues. Low complexity predominate over residues 871-894 (QAAQRPSAHSAHSASISPVESRGS). Residues 895-908 (SQERSRGVSQEKDG) show a composition bias toward basic and acidic residues. Residues Ser899 and Ser903 each carry the phosphoserine modification. Positions 909 to 920 (QISSAIVSSVQS) are enriched in low complexity.

It is found in the nucleus. Plays a role as an alternative splicing regulator. Regulates its own expression at the level of RNA processing. Also regulates the splicing of fibronectin and CD45 genes. May act, at least in part, by interaction with other R/S-containing splicing factors. Represses the splicing of MAPT/Tau exon 10. In Mus musculus (Mouse), this protein is Splicing factor, suppressor of white-apricot homolog (Sfswap).